A 427-amino-acid polypeptide reads, in one-letter code: UPF0229 protein KPN78578_11640 (427 aa).

The segment at 72–109 (RNRVHPGNDHFVQNDRIERPQGGGGGGGSGQGQASADG) is disordered. Over residues 77–90 (PGNDHFVQNDRIER) the composition is skewed to basic and acidic residues. Residues 92 to 102 (QGGGGGGGSGQ) are compositionally biased toward gly residues.

Belongs to the UPF0229 family.

The protein is UPF0229 protein KPN78578_11640 of Klebsiella pneumoniae subsp. pneumoniae (strain ATCC 700721 / MGH 78578).